Here is a 357-residue protein sequence, read N- to C-terminus: Cobalt-precorrin-5B C(1)-methyltransferase (357 aa).

This sequence belongs to the CbiD family.

The catalysed reaction is Co-precorrin-5B + S-adenosyl-L-methionine = Co-precorrin-6A + S-adenosyl-L-homocysteine. It participates in cofactor biosynthesis; adenosylcobalamin biosynthesis; cob(II)yrinate a,c-diamide from sirohydrochlorin (anaerobic route): step 6/10. In terms of biological role, catalyzes the methylation of C-1 in cobalt-precorrin-5B to form cobalt-precorrin-6A. This chain is Cobalt-precorrin-5B C(1)-methyltransferase, found in Alkaliphilus oremlandii (strain OhILAs) (Clostridium oremlandii (strain OhILAs)).